Consider the following 429-residue polypeptide: Phosphoribosylamine--glycine ligase (429 aa).

The 208-residue stretch at 109-316 folds into the ATP-grasp domain; the sequence is KDFLARHNIP…LVELCLAACE (208 aa). 135–196 provides a ligand contact to ATP; sequence LREKGAPIVI…EEFLDGEEAS (62 aa). Positions 212 to 236 are disordered; the sequence is SQDHKRVGDKDTGPNTGGMGAYSPA. A compositionally biased stretch (basic and acidic residues) spans 213–223; that stretch reads QDHKRVGDKDT. Residues Glu-286 and Asn-288 each coordinate Mg(2+).

Belongs to the GARS family. In terms of assembly, monomer. Requires Mg(2+) as cofactor. The cofactor is Mn(2+).

The catalysed reaction is 5-phospho-beta-D-ribosylamine + glycine + ATP = N(1)-(5-phospho-beta-D-ribosyl)glycinamide + ADP + phosphate + H(+). Its pathway is purine metabolism; IMP biosynthesis via de novo pathway; N(1)-(5-phospho-D-ribosyl)glycinamide from 5-phospho-alpha-D-ribose 1-diphosphate: step 2/2. The chain is Phosphoribosylamine--glycine ligase from Escherichia coli O6:H1 (strain CFT073 / ATCC 700928 / UPEC).